The following is a 141-amino-acid chain: Short-chain diamines transporter (141 aa).

4 helical membrane passes run 16-36 (VILL…PLEV), 39-59 (TLGI…NHFF), 76-96 (ILHA…MVAY), and 103-123 (WQAI…TFIF).

This sequence belongs to the proteobacterial antimicrobial compound efflux (PACE) (TC 2.A.117) family.

It is found in the cell inner membrane. Functionally, mediates the efflux of short-chain diamines when energized by an electrochemical gradient. Involved in resistance to the synthetic biocide chlorhexidine, a widely used antiseptic and disinfectant in both hospital and community settings. Interacts directly with chlorhexidine and mediates its efflux via an energy-dependent mechanism. This is Short-chain diamines transporter from Acinetobacter baylyi (strain ATCC 33305 / BD413 / ADP1).